Reading from the N-terminus, the 121-residue chain is Putative membrane protein insertion efficiency factor (121 aa).

The segment at 97 to 121 (VPARRDRHAGGRRCCPANVDEQRST) is disordered.

The protein belongs to the UPF0161 family.

The protein localises to the cell membrane. Its function is as follows. Could be involved in insertion of integral membrane proteins into the membrane. The sequence is that of Putative membrane protein insertion efficiency factor from Rhodococcus jostii (strain RHA1).